Consider the following 60-residue polypeptide: Potassium channel toxin alpha-KTx 3.6 (60 aa).

Positions 1–22 (MKVFFAVLITLFICSMIIGIHG) are cleaved as a signal peptide. 3 disulfides stabilise this stretch: C29/C49, C35/C54, and C39/C56. Lysine amide is present on K59.

It belongs to the short scorpion toxin superfamily. Potassium channel inhibitor family. Alpha-KTx 03 subfamily. As to expression, expressed by the venom gland.

The protein resides in the secreted. Its function is as follows. Blocks voltage-gated potassium channels. At 2 uM, blocks rat Kv1.1/KCNA1 and Kv1.3/KCNA3, has a strong effect on rat Kv1.2/KCNA2 and Kv1.6/KCNA6 as well as a moderate effect on Shaker IR. The sequence is that of Potassium channel toxin alpha-KTx 3.6 from Olivierus martensii (Manchurian scorpion).